The chain runs to 65 residues: Conotoxin TsMRCL-04 (65 aa).

An N-terminal signal peptide occupies residues M1–A20. Positions A21–K48 are excised as a propeptide. E63 is modified (glutamic acid 1-amide).

The protein belongs to the conotoxin T superfamily. Post-translationally, contains 2 disulfide bonds that can be either 'C1-C3, C2-C4' or 'C1-C4, C2-C3', since these disulfide connectivities have been observed for conotoxins with cysteine framework V (for examples, see AC P0DQQ7 and AC P81755). Expressed by the venom duct.

It is found in the secreted. In Conus tessulatus (Tessellate cone), this protein is Conotoxin TsMRCL-04.